The primary structure comprises 889 residues: Oxysterol-binding protein-related protein 8 (889 aa).

Position 1 is an N-acetylmethionine (Met1). Positions 1 to 129 (MEAALADGEP…SLKVQKKNYR (129 aa)) are disordered. 3 positions are modified to phosphoserine: Ser14, Ser65, and Ser68. Over residues 62–71 (PSLSPASLHS) the composition is skewed to polar residues. Basic and acidic residues-rich tracts occupy residues 73–88 (GFER…KDDS), 95–109 (SKSE…EKDS), and 116–129 (TKKE…KNYR). Residues 148–265 (VIVMADWLKI…WMDALELALK (118 aa)) enclose the PH domain. Ser314, Ser328, and Ser342 each carry phosphoserine. Residues 321–336 (FKDQDLYSDKSDKEND) are compositionally biased toward basic and acidic residues. The interval 321 to 374 (FKDQDLYSDKSDKENDPEHDESDNEVLGKSEESDTDTSERQDDSYIDPEPVEPL) is disordered. A compositionally biased stretch (basic and acidic residues) spans 346 to 363 (VLGKSEESDTDTSERQDD). A 1,2-diacyl-sn-glycero-3-phospho-(1D-myo-inositol 4-phosphate)-binding positions include 420–425 (LSRVVL), 482–485 (KPYN), and 514–515 (HH). A 1,2-diacyl-sn-glycero-3-phospho-L-serine is bound by residues 420 to 425 (LSRVVL) and Asn485. A 1,2-diacyl-sn-glycero-3-phospho-L-serine is bound at residue Ser540. Positions 706, 710, and 714 each coordinate a 1,2-diacyl-sn-glycero-3-phospho-(1D-myo-inositol 4-phosphate). Residues 772-823 (HRTPMVSVPKMKHKPTRQQKKVVKGYSSPEPDIQDSSGSEAQSVKPSTRRKK) form a disordered region. Basic residues predominate over residues 781–794 (KMKHKPTRQQKKVV). A compositionally biased stretch (polar residues) spans 805–817 (QDSSGSEAQSVKP). Phosphoserine is present on residues Ser807, Ser808, Ser810, and Ser814. A helical membrane pass occupies residues 871–888 (YFVIFLLILLQVIINFIF).

Belongs to the OSBP family. In terms of assembly, interacts with SPAG5. Interacts with NUP62. As to expression, widely expressed. Most abundant in liver, spleen, kidney, brain and adipose tissue.

The protein localises to the endoplasmic reticulum membrane. The protein resides in the nucleus membrane. Its function is as follows. Lipid transporter involved in lipid countertransport between the endoplasmic reticulum and the plasma membrane: specifically exchanges phosphatidylserine with phosphatidylinositol 4-phosphate (PI4P), delivering phosphatidylserine to the plasma membrane in exchange for PI4P, which is degraded by the SAC1/SACM1L phosphatase in the endoplasmic reticulum. Binds phosphatidylserine and PI4P in a mutually exclusive manner. Binds oxysterol, 25-hydroxycholesterol and cholesterol. The polypeptide is Oxysterol-binding protein-related protein 8 (Mus musculus (Mouse)).